A 153-amino-acid chain; its full sequence is uncharacterized protein (153 aa).

This is an uncharacterized protein from Bacillus subtilis (strain 168).